We begin with the raw amino-acid sequence, 205 residues long: Outer-membrane lipoprotein carrier protein (205 aa).

The signal sequence occupies residues 1–19 (MKKIIICFIFVFSINVSFA).

It belongs to the LolA family. Monomer.

The protein localises to the periplasm. In terms of biological role, participates in the translocation of lipoproteins from the inner membrane to the outer membrane. Only forms a complex with a lipoprotein if the residue after the N-terminal Cys is not an aspartate (The Asp acts as a targeting signal to indicate that the lipoprotein should stay in the inner membrane). In Francisella tularensis subsp. tularensis (strain FSC 198), this protein is Outer-membrane lipoprotein carrier protein.